Consider the following 525-residue polypeptide: Bifunctional purine biosynthesis protein PurH (525 aa).

Residues 1-148 (MPSNNLIKNA…KNYKNVIVIV (148 aa)) form the MGS-like domain.

This sequence belongs to the PurH family.

The catalysed reaction is (6R)-10-formyltetrahydrofolate + 5-amino-1-(5-phospho-beta-D-ribosyl)imidazole-4-carboxamide = 5-formamido-1-(5-phospho-D-ribosyl)imidazole-4-carboxamide + (6S)-5,6,7,8-tetrahydrofolate. It catalyses the reaction IMP + H2O = 5-formamido-1-(5-phospho-D-ribosyl)imidazole-4-carboxamide. It participates in purine metabolism; IMP biosynthesis via de novo pathway; 5-formamido-1-(5-phospho-D-ribosyl)imidazole-4-carboxamide from 5-amino-1-(5-phospho-D-ribosyl)imidazole-4-carboxamide (10-formyl THF route): step 1/1. The protein operates within purine metabolism; IMP biosynthesis via de novo pathway; IMP from 5-formamido-1-(5-phospho-D-ribosyl)imidazole-4-carboxamide: step 1/1. The protein is Bifunctional purine biosynthesis protein PurH of Buchnera aphidicola subsp. Acyrthosiphon pisum (strain 5A).